A 69-amino-acid chain; its full sequence is MDAVDSVVDPLREFAKDSVRLVKRCHKPDRKEFTKVAARTAIGFVVMGFVGFFVKLIFIPINNIIVGSG.

Residues methionine 1–glutamate 32 lie on the Cytoplasmic side of the membrane. A helical transmembrane segment spans residues phenylalanine 33–isoleucine 61. The Extracellular portion of the chain corresponds to asparagine 62–glycine 69.

It belongs to the SecE/SEC61-gamma family. Heterotrimeric complex composed of SEC61-alpha, SEC61-beta and SEC61-gamma.

Its subcellular location is the endoplasmic reticulum membrane. Necessary for protein translocation in the endoplasmic reticulum. The sequence is that of Protein transport protein Sec61 subunit gamma from Oryza sativa subsp. japonica (Rice).